A 187-amino-acid chain; its full sequence is UPF0340 protein SP_0663 (187 aa).

The protein belongs to the UPF0340 family.

The protein is UPF0340 protein SP_0663 of Streptococcus pneumoniae serotype 4 (strain ATCC BAA-334 / TIGR4).